Here is a 420-residue protein sequence, read N- to C-terminus: Gamma-glutamyl phosphate reductase (420 aa).

The protein belongs to the gamma-glutamyl phosphate reductase family.

Its subcellular location is the cytoplasm. It catalyses the reaction L-glutamate 5-semialdehyde + phosphate + NADP(+) = L-glutamyl 5-phosphate + NADPH + H(+). Its pathway is amino-acid biosynthesis; L-proline biosynthesis; L-glutamate 5-semialdehyde from L-glutamate: step 2/2. Its function is as follows. Catalyzes the NADPH-dependent reduction of L-glutamate 5-phosphate into L-glutamate 5-semialdehyde and phosphate. The product spontaneously undergoes cyclization to form 1-pyrroline-5-carboxylate. The polypeptide is Gamma-glutamyl phosphate reductase (Shewanella amazonensis (strain ATCC BAA-1098 / SB2B)).